A 197-amino-acid chain; its full sequence is Rac-like GTP-binding protein ARAC1 (197 aa).

Position 13–20 (13–20) interacts with GTP; it reads GDGAVGKT. Residues 35–43 carry the Effector region motif; it reads YVPTVFDNF. Residues 60 to 64 and 118 to 121 contribute to the GTP site; these read DTAGQ and TKLD. At Cys194 the chain carries Cysteine methyl ester. Residue Cys194 is the site of S-geranylgeranyl cysteine attachment. The propeptide at 195 to 197 is removed in mature form; sequence SIL.

Belongs to the small GTPase superfamily. Rho family. In terms of assembly, interacts with SPK1. Ubiquitous.

It localises to the cytoplasm. Its subcellular location is the membrane. Functionally, inactive GDP-bound Rho GTPases reside in the cytosol, are found in a complex with Rho GDP-dissociation inhibitors (Rho GDIs), and are released from the GDI protein in order to translocate to membranes upon activation. This Arabidopsis thaliana (Mouse-ear cress) protein is Rac-like GTP-binding protein ARAC1 (ARAC1).